The chain runs to 55 residues: UPF0391 membrane protein RSp1666 (55 aa).

Transmembrane regions (helical) follow at residues 5 to 25 (AVIFFIIALIAALFGFGGIAA) and 33 to 53 (ILFMIFVVLFVVSLFWGLVAG).

Belongs to the UPF0391 family.

The protein resides in the cell membrane. This Ralstonia nicotianae (strain ATCC BAA-1114 / GMI1000) (Ralstonia solanacearum) protein is UPF0391 membrane protein RSp1666.